The chain runs to 158 residues: U-limacoditoxin(8)-Dv66 (158 aa).

Positions 1–24 are cleaved as a signal peptide; it reads MALRAPWIALCCVLAVLFVVPAAT. Residues 25–32 constitute a propeptide that is removed on maturation; the sequence is RDEERQKR. 2 tandem repeats follow at residues 33-78 and 79-124. The 3 X 46 AA tandem repeats stretch occupies residues 33–158; that stretch reads GVDFGLQRGF…AQDPHGPGRK (126 aa). Residue proline 63 is modified to Proline amide. Positions 64 to 78 are excised as a propeptide; the sequence is GRKRRDAYEMERQKR. Residues 101–120 are disordered; the sequence is ARAQDPHGPGRKRRDAYEME. A Proline amide modification is found at proline 109. Positions 110 to 124 are excised as a propeptide; that stretch reads GRKRRDAYEMERQKR. One copy of the 3; half-length repeat lies at 125–158; it reads GVDFGLQRGFSGSELAKLKLALARAQDPHGPGRK. Proline 155 is subject to Proline amide.

It belongs to the diuretic hormone class 2 family. Expressed by the venom secretory cell of the spine. The spine is a cuticular structure containing a single large nucleated venom-secreting cell at its base. It is an independent unit capable of producing, storing and injecting venom. On the back of D.vulnerans caterpillars, spines are grouped together by 50 to 100 to form scoli, of which there are eight in D.vulnerans.

The protein resides in the secreted. Its function is as follows. Probable toxin. Does not show insecticidal, antimicrobial and antiparasitic activities. Does not induce increase in intracellular calcium in mouse DRG neurons, suggesting that it does not induce pain. The sequence is that of U-limacoditoxin(8)-Dv66 from Doratifera vulnerans (Mottled cup moth).